A 452-amino-acid chain; its full sequence is UDP-N-acetylmuramoylalanine--D-glutamate ligase (452 aa).

Position 119–125 (Gly-119–Thr-125) interacts with ATP.

Belongs to the MurCDEF family.

It localises to the cytoplasm. The enzyme catalyses UDP-N-acetyl-alpha-D-muramoyl-L-alanine + D-glutamate + ATP = UDP-N-acetyl-alpha-D-muramoyl-L-alanyl-D-glutamate + ADP + phosphate + H(+). Its pathway is cell wall biogenesis; peptidoglycan biosynthesis. Its function is as follows. Cell wall formation. Catalyzes the addition of glutamate to the nucleotide precursor UDP-N-acetylmuramoyl-L-alanine (UMA). In Streptococcus pyogenes serotype M5 (strain Manfredo), this protein is UDP-N-acetylmuramoylalanine--D-glutamate ligase.